A 394-amino-acid chain; its full sequence is Elongation factor Tu 2 (394 aa).

The region spanning 10 to 204 (KPHVNVGTIG…ALDSYIPEPE (195 aa)) is the tr-type G domain. The G1 stretch occupies residues 19–26 (GHVDHGKT). 19 to 26 (GHVDHGKT) is a GTP binding site. Residue threonine 26 coordinates Mg(2+). The tract at residues 60–64 (GITIN) is G2. Residues 81 to 84 (DCPG) form a G3 region. Residues 81-85 (DCPGH) and 136-139 (NKCD) each bind GTP. The tract at residues 136-139 (NKCD) is G4. Residues 174–176 (SAL) form a G5 region.

The protein belongs to the TRAFAC class translation factor GTPase superfamily. Classic translation factor GTPase family. EF-Tu/EF-1A subfamily. As to quaternary structure, monomer.

It localises to the cytoplasm. It carries out the reaction GTP + H2O = GDP + phosphate + H(+). Functionally, GTP hydrolase that promotes the GTP-dependent binding of aminoacyl-tRNA to the A-site of ribosomes during protein biosynthesis. This chain is Elongation factor Tu 2, found in Shewanella sp. (strain MR-4).